The primary structure comprises 473 residues: Probable transporter MCH2 (473 aa).

Over 1–37 (MSEERHEDHHRDVENKLNLNGKDDINGNTSISIEVPD) the chain is Cytoplasmic. Residues 38–58 (GGYGWFILLAFILYNFSTWGA) form a helical membrane-spanning segment. Over 59–83 (NSGYAIYLAHYLENNTFAGGSKLDY) the chain is Extracellular. N72 carries an N-linked (GlcNAc...) asparagine glycan. A helical transmembrane segment spans residues 84–105 (ASIGGLAFSCGLFFAPVITWLY). At 106–111 (HIFSIQ) the chain is on the cytoplasmic side. A helical membrane pass occupies residues 112–135 (FIIGLGILFQGAALLLAAFSVTLW). Residues 136 to 141 (EIYLTQ) lie on the Extracellular side of the membrane. The helical transmembrane segment at 142-163 (GVLIGFGLAFIFIPSVTLIPLW) threads the bilayer. Residues 164–169 (FRNKRS) are Cytoplasmic-facing. The chain crosses the membrane as a helical span at residues 170-186 (LASGIGTAGSGLGGIVF). Residues 187–200 (NLGMQSILQKRGVK) lie on the Extracellular side of the membrane. The chain crosses the membrane as a helical span at residues 201-220 (WALIAQCIICTSLSTIALML). Residues 221 to 243 (TRTTHQGLRQHKRSYKFELLDYD) lie on the Cytoplasmic side of the membrane. Residues 244-268 (VLSNFAVWLLFGFVSFAMLGYVVLL) form a helical membrane-spanning segment. At 269–286 (YSLSDFTVSLGYTSKQGS) the chain is on the extracellular side. Residues 287 to 304 (YVSCMVSVGSLLGRPIVG) form a helical membrane-spanning segment. Over 305–312 (HIADKYGS) the chain is Cytoplasmic. The helical transmembrane segment at 313 to 332 (LTVGMILHLVMAILCWAMWI) threads the bilayer. Residues 333 to 342 (PCKNLATAIA) are Extracellular-facing. Residues 343–362 (FGLLVGSIMGTIWPTIASIV) form a helical membrane-spanning segment. The Cytoplasmic segment spans residues 363–370 (TRIVGLQK). Residues 371-394 (LPGTFGSTWIFMAAFALVAPIIGL) form a helical membrane-spanning segment. Residues 395 to 408 (ELRSTDTNGNDYYR) lie on the Extracellular side of the membrane. The chain crosses the membrane as a helical span at residues 409–433 (TAIFVGFAYFGVSLCQWLLRGFIIA). Residues 434–473 (RDEIAVREAYSADQNELHLNVKLSHMSKCLFRYKQLPRRV) lie on the Cytoplasmic side of the membrane.

The protein belongs to the major facilitator superfamily. Monocarboxylate porter (TC 2.A.1.13) family.

The protein localises to the membrane. In terms of biological role, probable transporter. Does not act in the transport of monocarboxylic acids across the plasma membrane. The protein is Probable transporter MCH2 (MCH2) of Saccharomyces cerevisiae (strain ATCC 204508 / S288c) (Baker's yeast).